The primary structure comprises 95 residues: Co-chaperonin GroES (95 aa).

The protein belongs to the GroES chaperonin family. Heptamer of 7 subunits arranged in a ring. Interacts with the chaperonin GroEL.

Its subcellular location is the cytoplasm. Together with the chaperonin GroEL, plays an essential role in assisting protein folding. The GroEL-GroES system forms a nano-cage that allows encapsulation of the non-native substrate proteins and provides a physical environment optimized to promote and accelerate protein folding. GroES binds to the apical surface of the GroEL ring, thereby capping the opening of the GroEL channel. This Chlorobium luteolum (strain DSM 273 / BCRC 81028 / 2530) (Pelodictyon luteolum) protein is Co-chaperonin GroES.